Here is a 209-residue protein sequence, read N- to C-terminus: Ribonuclease HII (209 aa).

An RNase H type-2 domain is found at 6–209 (SLEAGIDEAG…IKRMTNSRLF (204 aa)). Residues Asp12, Glu13, and Asp108 each coordinate a divalent metal cation.

Belongs to the RNase HII family. Requires Mn(2+) as cofactor. The cofactor is Mg(2+).

It is found in the cytoplasm. The catalysed reaction is Endonucleolytic cleavage to 5'-phosphomonoester.. In terms of biological role, endonuclease that specifically degrades the RNA of RNA-DNA hybrids. In Caldivirga maquilingensis (strain ATCC 700844 / DSM 13496 / JCM 10307 / IC-167), this protein is Ribonuclease HII.